A 248-amino-acid chain; its full sequence is Probable transcriptional regulatory protein FTM_1203 (248 aa).

The protein belongs to the TACO1 family.

The protein localises to the cytoplasm. The sequence is that of Probable transcriptional regulatory protein FTM_1203 from Francisella tularensis subsp. mediasiatica (strain FSC147).